The sequence spans 131 residues: Protein NEGATIVE REGULATOR OF RESISTANCE (131 aa).

2 disordered regions span residues 1 to 33 (MDAT…DEVS) and 51 to 131 (TRRL…RAPA). Positions 12-15 (KRKR) match the Nuclear localization signal motif. Residues 116 to 131 (PPSDAPATPRSARAPA) show a composition bias toward low complexity.

The protein belongs to the NPR1-interactor family. As to quaternary structure, interacts with NPR1/NH1. Interacts with NPR2/NH2.

It localises to the nucleus. Its function is as follows. Acts as a negative regulator of disease resistance. Acts on basal resistance, age-related resistance and resistance mediated by the LRR receptor kinase XA21. Plants over-expressing NRR display enhanced susceptibility to the bacterial blight Xanthomonas oryzae pv. oryzae (Xoo). This Oryza sativa subsp. indica (Rice) protein is Protein NEGATIVE REGULATOR OF RESISTANCE.